The sequence spans 406 residues: Fructose-1,6-bisphosphatase, chloroplastic (406 aa).

The transit peptide at Met-1–Cys-47 directs the protein to the chloroplast. Positions 128, 157, 178, 180, and 181 each coordinate Mg(2+). Asp-181–Ser-184 lines the substrate pocket. A disulfide bond links Cys-222 and Cys-227. Substrate is bound by residues Asn-286, Tyr-318, Tyr-336, Tyr-338, and Lys-348. Glu-354 is a Mg(2+) binding site.

The protein belongs to the FBPase class 1 family. In terms of assembly, homotetramer. Mg(2+) serves as cofactor.

Its subcellular location is the plastid. It localises to the chloroplast stroma. It catalyses the reaction beta-D-fructose 1,6-bisphosphate + H2O = beta-D-fructose 6-phosphate + phosphate. The protein operates within carbohydrate biosynthesis; Calvin cycle. Inhibited by sodium chloride. Functionally, catalyzes the irreversible reaction from fructose-1,6-bisphosphate to fructose-6-phosphate and inorganic phosphate, to regenerate the primary CO(2) acceptor molecule, ribulose-1,5-bisphosphate. Involved in the regulation of photosynthetic performance and sucrose synthesis. The protein is Fructose-1,6-bisphosphatase, chloroplastic of Oryza sativa subsp. indica (Rice).